The following is a 4814-amino-acid chain: Nonribosomal peptide synthetase SIDC (4814 aa).

The interval 21-453 (PGPTLLHQLV…MKTSGCHGAA (433 aa)) is adenylation 1. The Carrier 1 domain occupies 528 to 601 (DLKKSTEPEL…HLVSSIKIID (74 aa)). Ser562 carries the post-translational modification O-(pantetheine 4'-phosphoryl)serine. The tract at residues 637–1045 (VQDIIPCTNL…SLLESMRSME (409 aa)) is condensation 1. Positions 1101–1488 (TYTDLNRNAN…SRVSSATAAV (388 aa)) are adenylation 2. Carrier domains follow at residues 1589-1666 (EDWN…HSSH) and 2134-2210 (SSWT…FENG). O-(pantetheine 4'-phosphoryl)serine occurs at positions 1626 and 2171. Condensation stretches follow at residues 1706–2210 (LQEA…FENG) and 2243–2649 (LPCT…HQHD). The tract at residues 2709–3100 (TFAQLNSIGN…IRSVKNIHDV (392 aa)) is adenylation 3. Residues 3203 to 3280 (SKDSAGYQKL…DLAVALSTAS (78 aa)) form the Carrier 4 domain. Ser3240 is modified (O-(pantetheine 4'-phosphoryl)serine). Positions 3319-3732 (YIYPCSPLQQ…VQVETALVDA (414 aa)) are condensation 4. The Carrier 5 domain occupies 3747-3823 (EVWGPAADVL…YLSSLVMRLT (77 aa)). At Ser3784 the chain carries O-(pantetheine 4'-phosphoryl)serine. Residues 3857 to 4258 (DILPTTPLQD…YVLRHAEEDV (402 aa)) are condensation 5. The Carrier 6 domain maps to 4295–4368 (NATSLAIRKV…HMAEQVAALG (74 aa)). Ser4329 is modified (O-(pantetheine 4'-phosphoryl)serine). Residues 4504–4686 (ETLLRLRIHH…HEDMQKITAD (183 aa)) are condensation 6.

It belongs to the NRP synthetase family. It depends on pantetheine 4'-phosphate as a cofactor.

It participates in siderophore biosynthesis. Nonribosomal peptide synthetase; part of the gene cluster that mediates the biosynthesis of at least 11 siderophores, including beauverichelin A, dimerumic acid (DA), Na-dimethyl coprogen (NADC), eleutherazine B, ferricrocin (FC), fusarinine A, fusarinine C (FsC), metachelin A, mevalonolactone, rhodotorulic acid (RA) and tenellin. This cocktail of siderophores for iron metabolism is essential for virulence, and more specifically for the fungal virulence in penetrating through the host cuticle. Siderophore synthesis is also involved in conidial germination under iron-deficient conditions. SIDC catalyzes the assembly of ferricrocin whereas SIDD catalyzes the assembly of fusarinine C. The sequence is that of Nonribosomal peptide synthetase SIDC from Beauveria bassiana (strain ARSEF 2860) (White muscardine disease fungus).